Reading from the N-terminus, the 249-residue chain is Pyridoxamine 5'-phosphate oxidase family protein ustO (249 aa).

21–24 (LFFV) contacts substrate. FMN contacts are provided by residues 76–81 (ATVMFC), 91–92 (RL), Arg-105, and 163–164 (RL). A substrate-binding site is contributed by 215-217 (ASY). Residues 227–247 (TGMALMFLVMVVAQWVGYVLY) traverse the membrane as a helical segment.

The protein belongs to the pyridoxamine 5'-phosphate oxidase family. FMN is required as a cofactor.

Its subcellular location is the membrane. It functions in the pathway mycotoxin biosynthesis. Pyridoxamine 5'-phosphate oxidase family protein; part of the gene cluster that mediates the biosynthesis of the secondary metabolite ustiloxin B, an antimitotic tetrapeptide. First, ustA is processed by the subtilisin-like endoprotease Kex2 that is outside the ustiloxin B gene cluster, at the C-terminal side of Arg-Lys, after transfer to Golgi apparatus through the endoplasmic reticulum (ER). Cleavage by KEX2 generates 16 peptides YAIG-I to YAIG-XVI. To process the precursor peptide further, at least two peptidases are necessary to cleave the N-terminal and C-terminal sides of the Tyr-Ala-Ile-Gly core peptide which serves as backbone for the synthesis of ustiloxin B, through cyclization and modification of the tyrosine with a non-protein coding amino acid, norvaline. One of the two peptidases must be the serine peptidase ustP; and the other pepdidase is probably ustH. Macrocyclization of the core peptide derived from ustA requires the tyrosinase ustQ, as well as the homologous oxidases ustYa and ustYb, and leads to the production of the first cyclization product N-desmethylustiloxin F. For the formation of N-desmethylustiloxin F, three oxidation steps are required, hydroxylation at the benzylic position, hydroxylation at either the aromatic ring of Tyr or beta-position of Ile, and oxidative cyclization. UstQ may catalyze the oxidation of a phenol moiety, whereas the ustYa and ustYb are most likely responsible for the remaining two-step oxidations. N-desmethylustiloxin F is then methylated by ustM to yield ustiloxin F which in turn substrate of the cytochrome P450 monooxygenase ustC which catalyzes the formation of S-deoxyustiloxin H. The flavoprotein monooxygenases ustF1 and ustF2 then participate in the modification of the side chain of S-deoxyustiloxin H, leading to the synthesis of an oxime intermediate, via ustiloxin H. Finally, carboxylative dehydration performed by the cysteine desulfurase-like protein ustD yields ustiloxin B. The chain is Pyridoxamine 5'-phosphate oxidase family protein ustO from Aspergillus flavus (strain ATCC 200026 / FGSC A1120 / IAM 13836 / NRRL 3357 / JCM 12722 / SRRC 167).